We begin with the raw amino-acid sequence, 354 residues long: Glycerol-3-phosphate dehydrogenase [NAD(+)], glycosomal (354 aa).

Residues 15 to 20 (GSGAFG), Phe-90, Lys-118, and Ala-150 contribute to the NAD(+) site. Residue Lys-118 coordinates substrate. The active-site Proton acceptor is Lys-203. Residues Arg-267 and Glu-293 each contribute to the NAD(+) site. 267 to 268 (RN) is a binding site for substrate. The short motif at 352-354 (SKM) is the Microbody targeting signal element.

The protein belongs to the NAD-dependent glycerol-3-phosphate dehydrogenase family.

The protein localises to the glycosome. The catalysed reaction is sn-glycerol 3-phosphate + NAD(+) = dihydroxyacetone phosphate + NADH + H(+). This Trypanosoma brucei rhodesiense protein is Glycerol-3-phosphate dehydrogenase [NAD(+)], glycosomal (GPD).